The chain runs to 229 residues: Ribonuclease 3 (229 aa).

The RNase III domain maps to 5 to 136; it reads LAELERALGI…VIGAIYLDQG (132 aa). E49 contributes to the Mg(2+) binding site. Residue D53 is part of the active site. Residues D122 and E125 each coordinate Mg(2+). E125 is an active-site residue. One can recognise a DRBM domain in the interval 161-229; sequence DPTTRLQEIV…AQAALADIDR (69 aa).

This sequence belongs to the ribonuclease III family. Homodimer. Mg(2+) is required as a cofactor.

It localises to the cytoplasm. It catalyses the reaction Endonucleolytic cleavage to 5'-phosphomonoester.. Functionally, digests double-stranded RNA. Involved in the processing of primary rRNA transcript to yield the immediate precursors to the large and small rRNAs (23S and 16S). Processes some mRNAs, and tRNAs when they are encoded in the rRNA operon. Processes pre-crRNA and tracrRNA of type II CRISPR loci if present in the organism. The protein is Ribonuclease 3 of Chloroflexus aggregans (strain MD-66 / DSM 9485).